Here is a 617-residue protein sequence, read N- to C-terminus: MYYLPSSCLVLFLFFSLFYHLPCASSKQTLGWCESQFQCGNITAGFPFWGGNRPEVCGHPLLELHCLDNITSLTISDHLYHVLSINHTYNTLRVARTDFLQSICLSPFPFANATLPPEIFDILPTYKSVTLYRCYPVIPDLARYGCPAIGSVSVSDNLENPVSCEARFTVNIPTSFVPNEKRLNITSLVRDVRNGFEVRLRIDENSCQECSSSHKYCGFTGTLPLETKCRPLNLPTRLSSEAKIATIAGVSLLPFLVLTLVVHIIRKQKTSNDKGQQDLKEHIPKPRIKALIQLKQYSYEQVKRITNSFAEVVGRGGFGIVYRGTLSDGRMVAVKVLKDLKGNNGEDFINEVASMSQTSHVNIVTLLGFCSEGYKRAIIYEFMENGSLDKFISSKKSSTMDWRELYGIALGVARGLEYLHHGCRTRIVHFDIKPQNVLLDDNLSPKVSDFGLAKLCERKESILSLMDTRGTIGYIAPEVFSRVYGSVSHKSDVYSYGMLVLDIIGARNKTSTEDTTSSTSSMYFPEWIYKDLEKGDNGRLIVNRSEEDEIAKKMTLVGLWCIQPWPLDRPAMNRVVEMMEGNLDALEVPPRPVLQCSVVPHLDSSWISEENSISSEI.

Positions 1–26 are cleaved as a signal peptide; it reads MYYLPSSCLVLFLFFSLFYHLPCASS. Residues 27-243 lie on the Extracellular side of the membrane; the sequence is KQTLGWCESQ…LPTRLSSEAK (217 aa). Residues Asn-41, Asn-69, Asn-86, Asn-112, and Asn-184 are each glycosylated (N-linked (GlcNAc...) asparagine). Residues 244–264 traverse the membrane as a helical segment; it reads IATIAGVSLLPFLVLTLVVHI. Residues 265–617 lie on the Cytoplasmic side of the membrane; that stretch reads IRKQKTSNDK…SEENSISSEI (353 aa). Residues 307–594 enclose the Protein kinase domain; it reads NSFAEVVGRG…ALEVPPRPVL (288 aa). Residues 313–321 and Lys-335 each bind ATP; that span reads VGRGGFGIV. Phosphotyrosine is present on Tyr-380. Asp-431 functions as the Proton acceptor in the catalytic mechanism. Phosphothreonine is present on residues Thr-468 and Thr-471.

This sequence belongs to the protein kinase superfamily. Ser/Thr protein kinase family.

It is found in the membrane. The enzyme catalyses L-seryl-[protein] + ATP = O-phospho-L-seryl-[protein] + ADP + H(+). It catalyses the reaction L-threonyl-[protein] + ATP = O-phospho-L-threonyl-[protein] + ADP + H(+). This chain is LEAF RUST 10 DISEASE-RESISTANCE LOCUS RECEPTOR-LIKE PROTEIN KINASE-like 2.4, found in Arabidopsis thaliana (Mouse-ear cress).